The sequence spans 130 residues: Arsenical-resistance protein 2 (130 aa).

Residues 17 to 124 (QRKDFQVVDL…WETHCRESNL (108 aa)) form the Rhodanese domain.

Involved in resistance to arsenic compounds. The protein is Arsenical-resistance protein 2 (ARR2) of Saccharomyces cerevisiae (strain ATCC 204508 / S288c) (Baker's yeast).